A 1048-amino-acid polypeptide reads, in one-letter code: Malignant fibrous histiocytoma-amplified sequence 1 homolog (1048 aa).

Residue Ala-2 is modified to N-acetylalanine. LRR repeat units follow at residues 60–81 (DIEV…LGSA), 84–105 (SLRV…VAEL), 108–129 (HLTE…VVSA), 132–153 (ELRK…LGAL), 155–176 (HLEE…FSCL), 178–199 (HLRT…LLQL), 201–222 (ALEE…ISAL), 224–246 (ALKI…CELA), 247–268 (SLES…FSRL), 270–292 (RLKM…LPLA), 293–314 (GLEE…IAGL), 316–337 (RLLT…IVEL), and 339–360 (GLEE…FGQL). Residues 60–360 (DIEVLNLGNN…AVLPDNFGQL (301 aa)) form a required for interaction with PJA2 region. A required for interaction with PPP2R2A region spans residues 60-645 (DIEVLNLGNN…DKLLSVAEHR (586 aa)). Residues 399-645 (QPAVQPRLKL…DKLLSVAEHR (247 aa)) form the Roc domain. Lys-597 carries the post-translational modification N6-acetyllysine.

As to quaternary structure, interacts with RAF1. Interacts with HSPD1. Interacts with PPP2CA; retains PPP2CA into the cytoplasm and excludes it from the nucleus. Interacts with PPP2R2A; the interaction is direct. Interacts with PJA2. In terms of processing, ubiquitinated. Ubiquitination by PJA2 does not lead MFHAS1 to proteasomal degradation but positively regulates its function in polarization of macrophages.

Its subcellular location is the cytoplasm. Probable GTP-binding protein. Functions in innate immunity and more specifically the inflammatory response as a regulator of the Toll-like receptor TLR2 and TLR4 signaling pathways. Negatively regulates the part of the TLR4 signaling pathway that leads to the activation of the transcription factor AP-1. By retaining the phosphatase complex PP2A into the cytoplasm, prevents the dephosphorylation of the AP-1 subunit JUN which is required for proper activation of the transcription factor. Both inhibits and activates the TLR2-dependent signaling pathway. Positively regulates the TLR2 signaling pathway to activate specifically the downstream p38 and JNK MAP kinases and promote the polarization of macrophages toward the pro-inflammatory M1 phenotype. It may also play a role in the regulation of inflammation induced by high glucose through the PKB/AKT signaling pathway. Also involved in erythrocyte differentiation through activation of the ERK1/ERK2 signaling pathway. The polypeptide is Malignant fibrous histiocytoma-amplified sequence 1 homolog (Mus musculus (Mouse)).